A 421-amino-acid polypeptide reads, in one-letter code: Serine hydroxymethyltransferase (421 aa).

Residues L121 and 125–127 (GHL) contribute to the (6S)-5,6,7,8-tetrahydrofolate site. Residue K229 is modified to N6-(pyridoxal phosphate)lysine.

The protein belongs to the SHMT family. Homodimer. Requires pyridoxal 5'-phosphate as cofactor.

It localises to the cytoplasm. It catalyses the reaction (6R)-5,10-methylene-5,6,7,8-tetrahydrofolate + glycine + H2O = (6S)-5,6,7,8-tetrahydrofolate + L-serine. Its pathway is one-carbon metabolism; tetrahydrofolate interconversion. It functions in the pathway amino-acid biosynthesis; glycine biosynthesis; glycine from L-serine: step 1/1. Catalyzes the reversible interconversion of serine and glycine with tetrahydrofolate (THF) serving as the one-carbon carrier. This reaction serves as the major source of one-carbon groups required for the biosynthesis of purines, thymidylate, methionine, and other important biomolecules. Also exhibits THF-independent aldolase activity toward beta-hydroxyamino acids, producing glycine and aldehydes, via a retro-aldol mechanism. This is Serine hydroxymethyltransferase from Actinobacillus pleuropneumoniae serotype 5b (strain L20).